Reading from the N-terminus, the 382-residue chain is Lipid-A-disaccharide synthase (382 aa).

Belongs to the LpxB family.

It catalyses the reaction 2-N,3-O-bis[(3R)-3-hydroxytetradecanoyl]-alpha-D-glucosaminyl 1-phosphate + UDP-2-N,3-O-bis[(3R)-3-hydroxytetradecanoyl]-alpha-D-glucosamine = lipid A disaccharide (E. coli) + UDP + H(+). The enzyme catalyses a lipid X + a UDP-2-N,3-O-bis[(3R)-3-hydroxyacyl]-alpha-D-glucosamine = a lipid A disaccharide + UDP + H(+). It participates in glycolipid biosynthesis; lipid IV(A) biosynthesis; lipid IV(A) from (3R)-3-hydroxytetradecanoyl-[acyl-carrier-protein] and UDP-N-acetyl-alpha-D-glucosamine: step 5/6. Condensation of UDP-2,3-diacylglucosamine and 2,3-diacylglucosamine-1-phosphate to form lipid A disaccharide, a precursor of lipid A, a phosphorylated glycolipid that anchors the lipopolysaccharide to the outer membrane of the cell. The protein is Lipid-A-disaccharide synthase of Escherichia coli O7:K1 (strain IAI39 / ExPEC).